The following is a 360-amino-acid chain: Peptide chain release factor 1 (360 aa).

An N5-methylglutamine modification is found at Q237.

This sequence belongs to the prokaryotic/mitochondrial release factor family. Methylated by PrmC. Methylation increases the termination efficiency of RF1.

It is found in the cytoplasm. In terms of biological role, peptide chain release factor 1 directs the termination of translation in response to the peptide chain termination codons UAG and UAA. This chain is Peptide chain release factor 1, found in Pseudomonas putida (strain GB-1).